Consider the following 54-residue polypeptide: Small ribosomal subunit protein uS14 (54 aa).

The Zn(2+) site is built by Cys19, Cys22, Cys37, and Cys40.

The protein belongs to the universal ribosomal protein uS14 family. Zinc-binding uS14 subfamily. As to quaternary structure, part of the 30S ribosomal subunit. Zn(2+) serves as cofactor.

In terms of biological role, binds 16S rRNA, required for the assembly of 30S particles. The protein is Small ribosomal subunit protein uS14 of Sulfolobus acidocaldarius (strain ATCC 33909 / DSM 639 / JCM 8929 / NBRC 15157 / NCIMB 11770).